The primary structure comprises 200 residues: Phospholipase A2 inhibitor LNF2 (200 aa).

The first 19 residues, 1 to 19 (MKSLHTICLLFIFVARGNS), serve as a signal peptide directing secretion. Intrachain disulfides connect Cys22-Cys46, Cys25-Cys32, Cys39-Cys67, Cys73-Cys94, Cys95-Cys100, Cys118-Cys143, Cys136-Cys165, and Cys169-Cys191. N-linked (GlcNAc...) asparagine glycosylation occurs at Asn176.

It belongs to the CNF-like-inhibitor family. As to quaternary structure, occurs as a mixture of oligomers. Tetrameric arrangement appears to be the predominant quaternary structure. In terms of tissue distribution, expressed by the liver.

Its subcellular location is the secreted. In terms of biological role, inhibits the enzymatic activity of phospholipase A2 (PA2). The protein is Phospholipase A2 inhibitor LNF2 of Lachesis muta muta (Bushmaster).